The chain runs to 385 residues: 4-hydroxy-3-methylbut-2-en-1-yl diphosphate synthase (flavodoxin) (385 aa).

[4Fe-4S] cluster contacts are provided by cysteine 282, cysteine 285, cysteine 317, and glutamate 324.

Belongs to the IspG family. Requires [4Fe-4S] cluster as cofactor.

The enzyme catalyses (2E)-4-hydroxy-3-methylbut-2-enyl diphosphate + oxidized [flavodoxin] + H2O + 2 H(+) = 2-C-methyl-D-erythritol 2,4-cyclic diphosphate + reduced [flavodoxin]. The protein operates within isoprenoid biosynthesis; isopentenyl diphosphate biosynthesis via DXP pathway; isopentenyl diphosphate from 1-deoxy-D-xylulose 5-phosphate: step 5/6. In terms of biological role, converts 2C-methyl-D-erythritol 2,4-cyclodiphosphate (ME-2,4cPP) into 1-hydroxy-2-methyl-2-(E)-butenyl 4-diphosphate. This chain is 4-hydroxy-3-methylbut-2-en-1-yl diphosphate synthase (flavodoxin), found in Nocardia farcinica (strain IFM 10152).